The following is a 240-amino-acid chain: 45 kDa antigen (240 aa).

Fibronectin type-III domains are found at residues 1-109 and 110-210; these read EFPD…FHTL and ANGT…KSGH.

This chain is 45 kDa antigen, found in Taenia ovis (Sheep tapeworm).